The chain runs to 453 residues: Bifunctional protein GlmU (453 aa).

The interval 1–226 is pyrophosphorylase; the sequence is MKFSTVILAA…SIEVEGVNDR (226 aa). UDP-N-acetyl-alpha-D-glucosamine is bound by residues 8–11, K22, Q73, 78–79, 100–102, G137, E151, N166, and N224; these read LAAG, GT, and YGD. Residue D102 coordinates Mg(2+). Residue N224 participates in Mg(2+) binding. Residues 227 to 247 form a linker region; sequence IQLARLERAFQARQAKKLLEQ. Positions 248 to 453 are N-acetyltransferase; sequence GVMLRDPARF…AGWQRPAKKK (206 aa). R330 and K348 together coordinate UDP-N-acetyl-alpha-D-glucosamine. Residue H360 is the Proton acceptor of the active site. Positions 363 and 374 each coordinate UDP-N-acetyl-alpha-D-glucosamine. Acetyl-CoA-binding positions include A377, 383–384, S402, A420, and R437; that span reads NY.

It in the N-terminal section; belongs to the N-acetylglucosamine-1-phosphate uridyltransferase family. The protein in the C-terminal section; belongs to the transferase hexapeptide repeat family. Homotrimer. Requires Mg(2+) as cofactor.

Its subcellular location is the cytoplasm. It carries out the reaction alpha-D-glucosamine 1-phosphate + acetyl-CoA = N-acetyl-alpha-D-glucosamine 1-phosphate + CoA + H(+). The catalysed reaction is N-acetyl-alpha-D-glucosamine 1-phosphate + UTP + H(+) = UDP-N-acetyl-alpha-D-glucosamine + diphosphate. It functions in the pathway nucleotide-sugar biosynthesis; UDP-N-acetyl-alpha-D-glucosamine biosynthesis; N-acetyl-alpha-D-glucosamine 1-phosphate from alpha-D-glucosamine 6-phosphate (route II): step 2/2. Its pathway is nucleotide-sugar biosynthesis; UDP-N-acetyl-alpha-D-glucosamine biosynthesis; UDP-N-acetyl-alpha-D-glucosamine from N-acetyl-alpha-D-glucosamine 1-phosphate: step 1/1. The protein operates within bacterial outer membrane biogenesis; LPS lipid A biosynthesis. Functionally, catalyzes the last two sequential reactions in the de novo biosynthetic pathway for UDP-N-acetylglucosamine (UDP-GlcNAc). The C-terminal domain catalyzes the transfer of acetyl group from acetyl coenzyme A to glucosamine-1-phosphate (GlcN-1-P) to produce N-acetylglucosamine-1-phosphate (GlcNAc-1-P), which is converted into UDP-GlcNAc by the transfer of uridine 5-monophosphate (from uridine 5-triphosphate), a reaction catalyzed by the N-terminal domain. The polypeptide is Bifunctional protein GlmU (Vibrio cholerae serotype O1 (strain M66-2)).